Here is a 356-residue protein sequence, read N- to C-terminus: WAT1-related protein At1g68170 (356 aa).

The next 10 membrane-spanning stretches (helical) occupy residues 4-24 (ITAM…FKLA), 33-53 (VLVA…CFIF), 65-85 (LMLL…ILTI), 94-114 (TFTS…AALL), 125-145 (VGLA…VFIF), 176-196 (ISIL…LWFL), 210-230 (WNAT…ALCW), 245-265 (LLTI…VNAW), 273-293 (LFVS…GSFL), and 298-318 (LHLG…IVLW). EamA domains are found at residues 14 to 142 (TAGL…GALV) and 191 to 317 (ISLW…YIVL).

This sequence belongs to the drug/metabolite transporter (DMT) superfamily. Plant drug/metabolite exporter (P-DME) (TC 2.A.7.4) family.

It localises to the membrane. This chain is WAT1-related protein At1g68170, found in Arabidopsis thaliana (Mouse-ear cress).